The primary structure comprises 245 residues: Probable phosphatase YcdX (245 aa).

His7, His9, His15, His40, Glu73, His101, His131, Asp192, and His194 together coordinate Zn(2+).

This sequence belongs to the PHP family. As to quaternary structure, homotrimer. Zn(2+) serves as cofactor.

This is Probable phosphatase YcdX from Escherichia coli O127:H6 (strain E2348/69 / EPEC).